The chain runs to 194 residues: Imidazoleglycerol-phosphate dehydratase (194 aa).

It belongs to the imidazoleglycerol-phosphate dehydratase family.

The protein localises to the cytoplasm. The enzyme catalyses D-erythro-1-(imidazol-4-yl)glycerol 3-phosphate = 3-(imidazol-4-yl)-2-oxopropyl phosphate + H2O. Its pathway is amino-acid biosynthesis; L-histidine biosynthesis; L-histidine from 5-phospho-alpha-D-ribose 1-diphosphate: step 6/9. This is Imidazoleglycerol-phosphate dehydratase from Bacillus subtilis (strain 168).